The following is a 115-amino-acid chain: Large ribosomal subunit protein bL19 (115 aa).

The protein belongs to the bacterial ribosomal protein bL19 family.

Its function is as follows. This protein is located at the 30S-50S ribosomal subunit interface and may play a role in the structure and function of the aminoacyl-tRNA binding site. In Lactobacillus acidophilus (strain ATCC 700396 / NCK56 / N2 / NCFM), this protein is Large ribosomal subunit protein bL19.